Consider the following 488-residue polypeptide: Metalloreductase STEAP3 (488 aa).

Topologically, residues 1–207 (MSGEMDKPLI…AREVEAIPLR (207 aa)) are cytoplasmic. A phosphoserine mark is found at Ser11, Ser17, and Ser20. NADP(+) contacts are provided by residues 36–39 (SGDF), 58–59 (SR), 91–98 (VFREHYSS), Asn116, and Ala151. Trp152 and Asp160 together coordinate FAD. Residues 208–228 (LLPSWKVPTLLALGLFVCFYA) form a helical membrane-spanning segment. Residue Tyr229 participates in Fe(3+) binding. The Vesicular portion of the chain corresponds to 229–258 (YNFIRDVLQPYIRKDENKFYKMPLSVVNTT). Residue Asn256 is glycosylated (N-linked (GlcNAc...) asparagine). A helical membrane pass occupies residues 259-279 (LPCVAYVLLSLVYLPGVLAAA). The Ferric oxidoreductase domain occupies 259–407 (LPCVAYVLLS…LGFVALMLST (149 aa)). Residues 280 to 304 (LQLRRGTKYQRFPDWLDHWLQHRKQ) lie on the Cytoplasmic side of the membrane. Positions 281, 302, and 303 each coordinate FAD. Residues 305-325 (IGLLSFFFAMLHALYSFCLPL) form a helical membrane-spanning segment. A heme b-binding site is contributed by His316. Tyr319 is a Fe(3+) binding site. Residues 326 to 358 (RRSHRYDLVNLAVKQVLANKSRLWVEEEVWRME) are Vesicular-facing. Residues 359–379 (IYLSLGVLALGMLSLLAVTSI) form a helical membrane-spanning segment. Ser378 provides a ligand contact to FAD. Topologically, residues 380-390 (PSIANSLNWKE) are cytoplasmic. A helical transmembrane segment spans residues 391–411 (FSFVQSTLGFVALMLSTMHTL). Gln395 is an FAD binding site. His409 is a binding site for heme b. The Vesicular segment spans residues 412-433 (TYGWTRAFEENHYKFYLPPTFT). Residues 434-454 (LTLLLPCVIILAKGLFLLPCL) traverse the membrane as a helical segment. The Cytoplasmic segment spans residues 455–488 (SHRLTKIRRGWERDGAVKFMLPAGHTQGEKTSHV). Ser486 bears the Phosphoserine mark.

It belongs to the STEAP family. As to quaternary structure, homodimer. Interacts with BNIP3L, MYT1, RHBDL4/RHBDD1 and TCTP. It depends on FAD as a cofactor. The cofactor is heme b. Proteolytically cleaved by RHBDL4/RHBDD1. RHBDL4/RHBDD1-induced cleavage occurs at multiple sites in a glycosylation-independent manner. In terms of processing, glycosylated.

It localises to the endosome membrane. The catalysed reaction is 2 Fe(2+) + NADP(+) + H(+) = 2 Fe(3+) + NADPH. It carries out the reaction 2 Cu(+) + NADP(+) + H(+) = 2 Cu(2+) + NADPH. Its function is as follows. Integral membrane protein that functions as a NADPH-dependent ferric-chelate reductase, using NADPH from one side of the membrane to reduce a Fe(3+) chelate that is bound on the other side of the membrane. Mediates sequential transmembrane electron transfer from NADPH to FAD and onto heme, and finally to the Fe(3+) chelate. Can also reduce Cu(2+) to Cu(1+). Mediates efficient transferrin-dependent iron uptake in erythroid cells. May play a role downstream of p53/TP53 to interface apoptosis and cell cycle progression. Indirectly involved in exosome secretion by facilitating the secretion of proteins such as TCTP. The chain is Metalloreductase STEAP3 (Steap3) from Rattus norvegicus (Rat).